A 519-amino-acid chain; its full sequence is Probable WRKY transcription factor 33 (519 aa).

Disordered stretches follow at residues 1 to 34 (MAASFLTMDNSRTRQNMNGSANWSQQSGRTSTSS) and 123 to 212 (SSGV…CTFP). Polar residues predominate over residues 7–34 (TMDNSRTRQNMNGSANWSQQSGRTSTSS). Residues 130 to 142 (TTTTTTTTTTTTT) show a composition bias toward low complexity. Over residues 164-174 (TETRPNNQAVS) the composition is skewed to polar residues. Residues 178–188 (REQRKGEDGYN) show a composition bias toward basic and acidic residues. The WRKY 1 DNA-binding region spans 178 to 242 (REQRKGEDGY…YKGSHNHPKP (65 aa)). Zn(2+) is bound by residues cysteine 209, cysteine 214, histidine 237, and histidine 239. 2 disordered regions span residues 232-255 (VYKGSHNHPKPQSTRRSSSSSSTF) and 267-349 (NRQA…REPR). Residues 245 to 254 (TRRSSSSSST) are compositionally biased toward low complexity. Polar residues predominate over residues 269–299 (QASSDQPNSNNSFHQSDSFGMQQEDNTTSDS). Positions 323 to 332 (PEAKRWKGDN) are enriched in basic and acidic residues. Residues 356–421 (SDIDILDDGY…YEGKHNHDVP (66 aa)) constitute a DNA-binding region (WRKY 2). Zn(2+) is bound by residues cysteine 387, cysteine 392, histidine 416, and histidine 418.

This sequence belongs to the WRKY group I family. As to quaternary structure, interacts with MKS1. Interacts with ATG18A. Interacts with SIB1 and SIB2. Interacts with VQ1 and VQ10. Phosphorylated by MPK4. Phosphorylated on serine residues by MPK3 and MPK6 following infection with the necrotrophic fungal pathogen B.cinerea. In terms of tissue distribution, highly expressed in roots, leaves and flowers, and at lower levels in stems, siliques and seeds.

Its subcellular location is the nucleus. In terms of biological role, transcription factor. Interacts specifically with the W box (5'-TTGAC[CT]-3'), a frequently occurring elicitor-responsive cis-acting element. Involved in defense responses. Required for resistance to the necrotrophic fungal pathogen B.cinerea. Regulates the antagonistic relationship between defense pathways mediating responses to the bacterial pathogen P. syringae and the necrotrophic pathogen B.cinerea. Required for the phytoalexin camalexin synthesis following infection with B.cinerea. Acts as a positive regulator of the camalexin biosynthetic genes PAD3 (CYP71B15) and CYP71A13 by binding to their promoters. Acts downstream of MPK3 and MPK6 in reprogramming the expression of camalexin biosynthetic genes, which drives the metabolic flow to camalexin production. Functions with WRKY25 as positive regulator of salt stress response and abscisic acid (ABA) signaling. Functions with WRKY25 and WRKY26 as positive regulator of plant thermotolerance by partially participating in ethylene-response signal transduction pathway. The DNA-binding activity of WRKY33 is increased by SIB1 and SIB2. This is Probable WRKY transcription factor 33 (WRKY33) from Arabidopsis thaliana (Mouse-ear cress).